A 386-amino-acid chain; its full sequence is Probable pectin lyase E (386 aa).

The first 16 residues, 1–16 (MKTAVLSLFLALQTYA), serve as a signal peptide directing secretion. Residues cysteine 77 and cysteine 101 are joined by a disulfide bond. Asparagine 124 carries N-linked (GlcNAc...) asparagine glycosylation. The active site involves arginine 251. Cysteines 326 and 334 form a disulfide.

Belongs to the polysaccharide lyase 1 family.

The protein localises to the secreted. The catalysed reaction is Eliminative cleavage of (1-&gt;4)-alpha-D-galacturonan methyl ester to give oligosaccharides with 4-deoxy-6-O-methyl-alpha-D-galact-4-enuronosyl groups at their non-reducing ends.. Pectinolytic enzymes consist of four classes of enzymes: pectin lyase, polygalacturonase, pectin methylesterase and rhamnogalacturonase. Among pectinolytic enzymes, pectin lyase is the most important in depolymerization of pectin, since it cleaves internal glycosidic bonds of highly methylated pectins. The sequence is that of Probable pectin lyase E (pelE) from Aspergillus fumigatus (strain CBS 144.89 / FGSC A1163 / CEA10) (Neosartorya fumigata).